Reading from the N-terminus, the 254-residue chain is UPF0246 protein CPR_2119 (254 aa).

It belongs to the UPF0246 family.

The chain is UPF0246 protein CPR_2119 from Clostridium perfringens (strain SM101 / Type A).